Here is a 428-residue protein sequence, read N- to C-terminus: Enolase 3 (428 aa).

Gln163 is a (2R)-2-phosphoglycerate binding site. Glu205 serves as the catalytic Proton donor. Residues Asp242, Glu286, and Asp313 each contribute to the Mg(2+) site. (2R)-2-phosphoglycerate is bound by residues Lys338, Arg367, Ser368, and Lys389. Lys338 serves as the catalytic Proton acceptor.

This sequence belongs to the enolase family. Mg(2+) serves as cofactor.

It is found in the cytoplasm. Its subcellular location is the secreted. The protein resides in the cell surface. It catalyses the reaction (2R)-2-phosphoglycerate = phosphoenolpyruvate + H2O. Its pathway is carbohydrate degradation; glycolysis; pyruvate from D-glyceraldehyde 3-phosphate: step 4/5. Catalyzes the reversible conversion of 2-phosphoglycerate (2-PG) into phosphoenolpyruvate (PEP). It is essential for the degradation of carbohydrates via glycolysis. This is Enolase 3 from Lactobacillus johnsonii (strain CNCM I-12250 / La1 / NCC 533).